Here is a 174-residue protein sequence, read N- to C-terminus: Neuromedin-U (174 aa).

An N-terminal signal peptide occupies residues 1–37; sequence MSRAANRRPGLSAGQLAAATASPLLSLLLLLACCADA. Residues 38–105 constitute a propeptide that is removed on maturation; the sequence is CRGTPISPQR…EQTEKDNAKR (68 aa). A Methionine sulfoxide; partial modification is found at M141. Position 166 is an asparagine amide (N166). The propeptide occupies 170–174; it reads STSFI.

Belongs to the NmU family. In terms of tissue distribution, expressed throughout the gastrointestinal tract with highest levels in the duodenum and jejunum. Low levels in spinal cord, hypothalamus, and stomach. Neuromedin-U-23: Expressed in the small intestine and the pituitary gland (at protein level). Neuromedin precursor-related peptides: Expressed in pituitary gland and small intestine (at protein level).

It localises to the secreted. In terms of biological role, ligand for receptors NMUR1 and NMUR2. Receptor-binding is very tight if not irreversible and triggers an increase in the cytosolic Ca(2+) concentration. Stimulates muscle contractions of specific regions of the gastrointestinal tract. In rat, NMU stimulates contractions of stomach circular muscle. Functionally, does not function as a ligand for either NMUR1 or NMUR2. Indirectly induces prolactin release although its potency is much lower than that of neuromedin precursor-related peptide 36. Its function is as follows. Does not function as a ligand for either NMUR1 or NMUR2. Indirectly induces prolactin release from lactotroph cells in the pituitary gland, probably via the hypothalamic dopaminergic system. The sequence is that of Neuromedin-U (Nmu) from Rattus norvegicus (Rat).